The primary structure comprises 332 residues: UPF0194 membrane protein YbhG (332 aa).

An N-terminal signal peptide occupies residues 1–16; it reads MMKKPVVIGLAVVVLA. Residues 108–209 are a coiled coil; sequence EEIAQAAAAV…LNLQDSTLIA (102 aa).

This sequence belongs to the UPF0194 family.

It localises to the periplasm. The sequence is that of UPF0194 membrane protein YbhG from Shigella boydii serotype 4 (strain Sb227).